The following is a 439-amino-acid chain: Proline--tRNA ligase (439 aa).

The protein belongs to the class-II aminoacyl-tRNA synthetase family. ProS type 2 subfamily. As to quaternary structure, homodimer.

It localises to the cytoplasm. It carries out the reaction tRNA(Pro) + L-proline + ATP = L-prolyl-tRNA(Pro) + AMP + diphosphate. Catalyzes the attachment of proline to tRNA(Pro) in a two-step reaction: proline is first activated by ATP to form Pro-AMP and then transferred to the acceptor end of tRNA(Pro). The sequence is that of Proline--tRNA ligase from Phenylobacterium zucineum (strain HLK1).